The following is a 349-amino-acid chain: CCN family member 2 (349 aa).

A signal peptide spans 1 to 26; that stretch reads MSATGLGPVRCAFVLLLALCSRPASS. The 72-residue stretch at 27 to 98 folds into the IGFBP N-terminal domain; the sequence is QDCSAPCQCP…NRKIGVCTAK (72 aa). 6 cysteine pairs are disulfide-bonded: Cys-29-Cys-54, Cys-33-Cys-56, Cys-35-Cys-57, Cys-43-Cys-60, Cys-68-Cys-82, and Cys-74-Cys-95. Residues 101–167 enclose the VWFC domain; it reads APCVFGGTVY…GKCCEEWVCD (67 aa). The 46-residue stretch at 198–243 folds into the TSP type-1 domain; it reads NCLVQTTEWSACSKTCGMGISTRVTNDNAFCRLEKQSRLCMVRPCE. The interval 247–349 is heparin-binding; that stretch reads EENIKKGKKC…YYRKMYGDMA (103 aa). 5 disulfide bridges follow: Cys-256–Cys-293, Cys-273–Cys-307, Cys-284–Cys-323, Cys-287–Cys-325, and Cys-292–Cys-329. A CTCK domain is found at 256–330; the sequence is CIRTPKISKP…KTCACHYNCP (75 aa).

The protein belongs to the CCN family. Monomer. Interacts with TSKU.

The protein resides in the secreted. Its subcellular location is the extracellular space. It localises to the extracellular matrix. Major connective tissue mitoattractant secreted by vascular endothelial cells. Promotes proliferation and differentiation of chondrocytes. Is involved in the stimulation of osteoblast differentiation and has a critical role in osteogenesis. Mediates heparin- and divalent cation-dependent cell adhesion in many cell types including fibroblasts, myofibroblasts, endothelial and epithelial cells. Enhances fibroblast growth factor-induced DNA synthesis. The sequence is that of CCN family member 2 (CCN2) from Bos taurus (Bovine).